Consider the following 354-residue polypeptide: S-adenosylmethionine:tRNA ribosyltransferase-isomerase (354 aa).

This sequence belongs to the QueA family. As to quaternary structure, monomer.

It localises to the cytoplasm. The catalysed reaction is 7-aminomethyl-7-carbaguanosine(34) in tRNA + S-adenosyl-L-methionine = epoxyqueuosine(34) in tRNA + adenine + L-methionine + 2 H(+). The protein operates within tRNA modification; tRNA-queuosine biosynthesis. Functionally, transfers and isomerizes the ribose moiety from AdoMet to the 7-aminomethyl group of 7-deazaguanine (preQ1-tRNA) to give epoxyqueuosine (oQ-tRNA). This is S-adenosylmethionine:tRNA ribosyltransferase-isomerase from Pseudomonas syringae pv. syringae (strain B728a).